The following is a 265-amino-acid chain: UPF0026 protein slr1464 (265 aa).

The Radical SAM core domain occupies 16 to 252; it reads RYGRSLGIDP…QNLAKKISGA (237 aa). The [4Fe-4S] cluster site is built by C32, C36, and C39. Residues 204–230 are disordered; the sequence is RPTRPKPLQRELEGRGNHTGTPYGDRP.

Belongs to the UPF0026 family. It depends on [4Fe-4S] cluster as a cofactor.

The sequence is that of UPF0026 protein slr1464 from Synechocystis sp. (strain ATCC 27184 / PCC 6803 / Kazusa).